The following is a 67-amino-acid chain: UPF0181 protein KPK_1966 (67 aa).

The tract at residues 48 to 67 is disordered; sequence EQIVARFEDEDEDQDEDEDD. A compositionally biased stretch (acidic residues) spans 55–67; that stretch reads EDEDEDQDEDEDD.

The protein belongs to the UPF0181 family.

This chain is UPF0181 protein KPK_1966, found in Klebsiella pneumoniae (strain 342).